The sequence spans 118 residues: Protein TusC (118 aa).

The protein belongs to the DsrF/TusC family. Heterohexamer, formed by a dimer of trimers. The hexameric TusBCD complex contains 2 copies each of TusB, TusC and TusD. The TusBCD complex interacts with TusE.

The protein localises to the cytoplasm. Its function is as follows. Part of a sulfur-relay system required for 2-thiolation of 5-methylaminomethyl-2-thiouridine (mnm(5)s(2)U) at tRNA wobble positions. The sequence is that of Protein TusC from Salmonella typhimurium (strain LT2 / SGSC1412 / ATCC 700720).